The sequence spans 154 residues: MTHDNKLQVEAIKCGTVIDHIPAQIGFKLLTLFKLTATDQRITIGLNLPSGELGRKDLIKIENTFLTEQQANQLAMYAPKATVNRIDNYEVVRKLTLSLPDHIDGVLTCPNSNCISRSEPVSSSFSVKSRDGDVHLKCRYCEKEFEHQVVLQAD.

The Zn(2+) site is built by cysteine 109, cysteine 114, cysteine 138, and cysteine 141.

It belongs to the PyrI family. In terms of assembly, contains catalytic and regulatory chains. It depends on Zn(2+) as a cofactor.

In terms of biological role, involved in allosteric regulation of aspartate carbamoyltransferase. The chain is Aspartate carbamoyltransferase regulatory chain from Serratia proteamaculans (strain 568).